The following is a 276-amino-acid chain: Large ribosomal subunit protein uL2 (276 aa).

Residues 224 to 276 form a disordered region; it reads VMNPVDHPHGGGEGKAPIGRKSPMTPWGKPTLGYKTRKKKNKSDKFIIRRRKK. Residues 258–276 show a composition bias toward basic residues; the sequence is KTRKKKNKSDKFIIRRRKK.

The protein belongs to the universal ribosomal protein uL2 family. In terms of assembly, part of the 50S ribosomal subunit. Forms a bridge to the 30S subunit in the 70S ribosome.

One of the primary rRNA binding proteins. Required for association of the 30S and 50S subunits to form the 70S ribosome, for tRNA binding and peptide bond formation. It has been suggested to have peptidyltransferase activity; this is somewhat controversial. Makes several contacts with the 16S rRNA in the 70S ribosome. This is Large ribosomal subunit protein uL2 from Geobacillus stearothermophilus (Bacillus stearothermophilus).